The primary structure comprises 413 residues: Endoplasmic reticulum resident protein 44.2 (413 aa).

An N-terminal signal peptide occupies residues 1–21; sequence MNLASVLLLLAACHLSVSVNG. The 115-residue stretch at 22 to 136 folds into the Thioredoxin domain; it reads QEHKEAIELS…LTNFVKFQLS (115 aa). Cysteine 184 and cysteine 233 are oxidised to a cystine. A glycan (N-linked (GlcNAc...) asparagine) is linked at asparagine 264. Residues 367-413 are disordered; the sequence is KAARGITDDHEAQAPSTRPIDTTPPPSVFKELKPSDKRYSILQKSEL. Residues 396-413 are compositionally biased toward basic and acidic residues; sequence KELKPSDKRYSILQKSEL. The Prevents secretion from ER motif lies at 410–413; that stretch reads KSEL.

The protein localises to the endoplasmic reticulum lumen. The chain is Endoplasmic reticulum resident protein 44.2 from Caenorhabditis elegans.